Here is a 269-residue protein sequence, read N- to C-terminus: Shikimate dehydrogenase (NADP(+)) (269 aa).

Shikimate-binding positions include 22–24 and T68; that span reads TLS. The active-site Proton acceptor is K72. Shikimate-binding residues include N93 and D104. Residues 128 to 132, 152 to 157, and F210 contribute to the NADP(+) site; these read GAGGA and NRTNLR. Y212 contributes to the shikimate binding site. An NADP(+)-binding site is contributed by G233.

This sequence belongs to the shikimate dehydrogenase family. In terms of assembly, homodimer.

The enzyme catalyses shikimate + NADP(+) = 3-dehydroshikimate + NADPH + H(+). Its pathway is metabolic intermediate biosynthesis; chorismate biosynthesis; chorismate from D-erythrose 4-phosphate and phosphoenolpyruvate: step 4/7. Involved in the biosynthesis of the chorismate, which leads to the biosynthesis of aromatic amino acids. Catalyzes the reversible NADPH linked reduction of 3-dehydroshikimate (DHSA) to yield shikimate (SA). The polypeptide is Shikimate dehydrogenase (NADP(+)) (Saccharolobus islandicus (strain L.S.2.15 / Lassen #1) (Sulfolobus islandicus)).